Reading from the N-terminus, the 433-residue chain is uncharacterized protein (433 aa).

Residues 1-26 (MTRRAEFEMGLFVILQSMFLISLCSS) form the signal peptide. 8 N-linked (GlcNAc...) asparagine glycosylation sites follow: Asn59, Asn72, Asn125, Asn159, Asn210, Asn275, Asn282, and Asn323. A lipid anchor (GPI-anchor amidated alanine) is attached at Ala405. The propeptide at 406-433 (SSQPRLHDEGVTRLVIFVLSMLLVMLLS) is removed in mature form.

The protein resides in the cell membrane. This is an uncharacterized protein from Arabidopsis thaliana (Mouse-ear cress).